A 1770-amino-acid chain; its full sequence is NEDD4-binding protein 2 (1770 aa).

Residues 1 to 40 (MPRRRKNLGGNPFRKTANPKEVVVSSVASREEPTTTLPSM) form a disordered region. In terms of domain architecture, CUE spans 46–89 (DQEELFTSISEIFSDLDPDVVYLMLSECDFKVENAMDCLLELSA). 2 coiled-coil regions span residues 90–177 (TDTK…NDSS) and 218–259 (HSVL…IAGC). The tract at residues 95–129 (EESSSQSFVASENQVGAAESKIMEKRPEEESEDSK) is disordered. Residues 97–108 (SSSQSFVASENQ) are compositionally biased toward polar residues. Residues 115–129 (KIMEKRPEEESEDSK) show a composition bias toward basic and acidic residues. An ATP-binding site is contributed by 447-454 (GLPGSGKS). 4 disordered regions span residues 712 to 756 (SKTD…GEIV), 795 to 822 (KTIGQRTKRNRKTEKTSSVQSDKKYNYP), 836 to 862 (DCVQQRGSPHESVEDGRKSQCDDASEP), and 890 to 913 (SLAQREHRSRMPKTGLSEPNLEIG). The span at 843-856 (SPHESVEDGRKSQC) shows a compositional bias: basic and acidic residues. Ser-906 is modified (phosphoserine). Thr-1210 is subject to Phosphothreonine. The disordered stretch occupies residues 1580 to 1606 (NENVTSHTGQKSKEKKPKKLKETEETP). A Smr domain is found at 1691–1770 (LDLHGLHVDE…KPGCLKVMLK (80 aa)).

Binds NEDD4. Binds BCL3 and CREBBP. In terms of processing, ubiquitinated; this targets the protein for degradation by the proteasome.

The protein resides in the cytoplasm. Functionally, has 5'-polynucleotide kinase and nicking endonuclease activity. May play a role in DNA repair or recombination. In Homo sapiens (Human), this protein is NEDD4-binding protein 2 (N4BP2).